Reading from the N-terminus, the 200-residue chain is Holliday junction branch migration complex subunit RuvA (200 aa).

The segment at 1-63 (MYAYVKGKLT…EDAQLLYGFS (63 aa)) is domain I. Residues 64–142 (SEEEKDMFLS…ITEEDSDSLL (79 aa)) are domain II. The tract at residues 143 to 149 (QVDATST) is flexible linker. The tract at residues 150 to 200 (EQDQFVQEAMLALEALGYSKRELAKVEKTLNKNKYDSVDEAVKAGLQLVVS) is domain III.

It belongs to the RuvA family. In terms of assembly, homotetramer. Forms an RuvA(8)-RuvB(12)-Holliday junction (HJ) complex. HJ DNA is sandwiched between 2 RuvA tetramers; dsDNA enters through RuvA and exits via RuvB. An RuvB hexamer assembles on each DNA strand where it exits the tetramer. Each RuvB hexamer is contacted by two RuvA subunits (via domain III) on 2 adjacent RuvB subunits; this complex drives branch migration. In the full resolvosome a probable DNA-RuvA(4)-RuvB(12)-RuvC(2) complex forms which resolves the HJ.

Its subcellular location is the cytoplasm. The RuvA-RuvB-RuvC complex processes Holliday junction (HJ) DNA during genetic recombination and DNA repair, while the RuvA-RuvB complex plays an important role in the rescue of blocked DNA replication forks via replication fork reversal (RFR). RuvA specifically binds to HJ cruciform DNA, conferring on it an open structure. The RuvB hexamer acts as an ATP-dependent pump, pulling dsDNA into and through the RuvAB complex. HJ branch migration allows RuvC to scan DNA until it finds its consensus sequence, where it cleaves and resolves the cruciform DNA. The polypeptide is Holliday junction branch migration complex subunit RuvA (Staphylococcus aureus (strain MRSA252)).